The following is a 632-amino-acid chain: Lipoma-preferred partner homolog (632 aa).

Disordered stretches follow at residues 1–118 (MSHP…RSSL) and 135–249 (SSPY…RSYN). Over residues 26 to 40 (THSFGTPSISVSTQQ) the composition is skewed to polar residues. A compositionally biased stretch (low complexity) spans 41–53 (PPKKFAPVVAPKP). At lysine 109 the chain carries N6-acetyllysine. Residues serine 117 and serine 152 each carry the phosphoserine modification. A compositionally biased stretch (low complexity) spans 144–160 (PGSSSSIASPPVSTPVT). Polar residues-rich tracts occupy residues 172–182 (PLTATKKSATK) and 206–239 (SYSTASTSSRPAFNVQVKSAQPSTHYMTGSSSGQ). A Phosphotyrosine modification is found at tyrosine 241. At arginine 246 the chain carries Omega-N-methylarginine. Lysine 324 is covalently cross-linked (Glycyl lysine isopeptide (Lys-Gly) (interchain with G-Cter in SUMO1)). 3 consecutive LIM zinc-binding domains span residues 434–493 (GRCA…INTL), 494–554 (EQCS…KFAP), and 555–623 (RCSV…RIRV).

Belongs to the zyxin/ajuba family. In terms of assembly, interacts with PDZ domains of SCRIB, with VASP and with ACTN1/alpha-actinin.

It localises to the nucleus. The protein resides in the cytoplasm. It is found in the cell junction. Functionally, may play a structural role at sites of cell adhesion in maintaining cell shape and motility. In addition to these structural functions, it may also be implicated in signaling events and activation of gene transcription. May be involved in signal transduction from cell adhesion sites to the nucleus allowing successful integration of signals arising from soluble factors and cell-cell adhesion. Also suggested to serve as a scaffold protein upon which distinct protein complexes are assembled in the cytoplasm and in the nucleus. The protein is Lipoma-preferred partner homolog (Lpp) of Rattus norvegicus (Rat).